Reading from the N-terminus, the 396-residue chain is Ornithine aminotransferase 2 (396 aa).

K255 carries the N6-(pyridoxal phosphate)lysine modification.

It belongs to the class-III pyridoxal-phosphate-dependent aminotransferase family. OAT subfamily. Requires pyridoxal 5'-phosphate as cofactor.

The protein resides in the cytoplasm. The catalysed reaction is a 2-oxocarboxylate + L-ornithine = L-glutamate 5-semialdehyde + an L-alpha-amino acid. The protein operates within amino-acid biosynthesis; L-proline biosynthesis; L-glutamate 5-semialdehyde from L-ornithine: step 1/1. Its function is as follows. Catalyzes the interconversion of ornithine to glutamate semialdehyde. The sequence is that of Ornithine aminotransferase 2 from Staphylococcus aureus (strain COL).